Reading from the N-terminus, the 1055-residue chain is Putative helicase/primase complex protein (1055 aa).

It belongs to the asfivirus F1055L family.

Functionally, may be involved in DNA replication. This is Putative helicase/primase complex protein from Ornithodoros (relapsing fever ticks).